The chain runs to 66 residues: Large ribosomal subunit protein bL33c (66 aa).

Belongs to the bacterial ribosomal protein bL33 family.

Its subcellular location is the plastid. It is found in the chloroplast. This chain is Large ribosomal subunit protein bL33c, found in Nasturtium officinale (Watercress).